Consider the following 141-residue polypeptide: ATP synthase epsilon chain (141 aa).

The protein belongs to the ATPase epsilon chain family. As to quaternary structure, F-type ATPases have 2 components, CF(1) - the catalytic core - and CF(0) - the membrane proton channel. CF(1) has five subunits: alpha(3), beta(3), gamma(1), delta(1), epsilon(1). CF(0) has three main subunits: a, b and c.

The protein resides in the cell inner membrane. Its function is as follows. Produces ATP from ADP in the presence of a proton gradient across the membrane. The sequence is that of ATP synthase epsilon chain from Burkholderia multivorans (strain ATCC 17616 / 249).